The following is a 947-amino-acid chain: Bifunctional glutamine synthetase adenylyltransferase/adenylyl-removing enzyme (947 aa).

Residues 1–440 are adenylyl removase; it reads MTPLSSPLSQ…VFNELIGDDE (440 aa). The adenylyl transferase stretch occupies residues 450–947; that stretch reads SEPWREVWQD…ASWRKWLVAV (498 aa).

It belongs to the GlnE family. Mg(2+) is required as a cofactor.

The enzyme catalyses [glutamine synthetase]-O(4)-(5'-adenylyl)-L-tyrosine + phosphate = [glutamine synthetase]-L-tyrosine + ADP. The catalysed reaction is [glutamine synthetase]-L-tyrosine + ATP = [glutamine synthetase]-O(4)-(5'-adenylyl)-L-tyrosine + diphosphate. Involved in the regulation of glutamine synthetase GlnA, a key enzyme in the process to assimilate ammonia. When cellular nitrogen levels are high, the C-terminal adenylyl transferase (AT) inactivates GlnA by covalent transfer of an adenylyl group from ATP to specific tyrosine residue of GlnA, thus reducing its activity. Conversely, when nitrogen levels are low, the N-terminal adenylyl removase (AR) activates GlnA by removing the adenylyl group by phosphorolysis, increasing its activity. The regulatory region of GlnE binds the signal transduction protein PII (GlnB) which indicates the nitrogen status of the cell. The chain is Bifunctional glutamine synthetase adenylyltransferase/adenylyl-removing enzyme from Salmonella heidelberg (strain SL476).